We begin with the raw amino-acid sequence, 166 residues long: Transcription antitermination protein NusB (166 aa).

Positions 1 to 15 (MISDDSDRFNPRDPK) are enriched in basic and acidic residues. Residues 1–30 (MISDDSDRFNPRDPKPANAGKPSKSAKRRE) are disordered.

This sequence belongs to the NusB family.

Involved in transcription antitermination. Required for transcription of ribosomal RNA (rRNA) genes. Binds specifically to the boxA antiterminator sequence of the ribosomal RNA (rrn) operons. The sequence is that of Transcription antitermination protein NusB from Pseudomonas fluorescens (strain ATCC BAA-477 / NRRL B-23932 / Pf-5).